We begin with the raw amino-acid sequence, 114 residues long: Small ribosomal subunit protein eS25 (114 aa).

Residues 1–33 form a disordered region; the sequence is MAPKKDKAPPPSSKPAKSGGKQKKKKWSKGKQK. Residues 20–30 show a composition bias toward basic residues; sequence GKQKKKKWSKG.

This sequence belongs to the eukaryotic ribosomal protein eS25 family.

In Amaranthus cruentus (Purple amaranth), this protein is Small ribosomal subunit protein eS25 (RPS25).